Consider the following 141-residue polypeptide: ATP synthase epsilon chain (141 aa).

It belongs to the ATPase epsilon chain family. In terms of assembly, F-type ATPases have 2 components, CF(1) - the catalytic core - and CF(0) - the membrane proton channel. CF(1) has five subunits: alpha(3), beta(3), gamma(1), delta(1), epsilon(1). CF(0) has three main subunits: a, b and c.

The protein localises to the cell membrane. Produces ATP from ADP in the presence of a proton gradient across the membrane. In Lactococcus lactis subsp. lactis (strain IL1403) (Streptococcus lactis), this protein is ATP synthase epsilon chain.